Consider the following 145-residue polypeptide: Cell division protein SepF (145 aa).

This sequence belongs to the SepF family. As to quaternary structure, homodimer. Interacts with FtsZ.

The protein localises to the cytoplasm. Its function is as follows. Cell division protein that is part of the divisome complex and is recruited early to the Z-ring. Probably stimulates Z-ring formation, perhaps through the cross-linking of FtsZ protofilaments. Its function overlaps with FtsA. This chain is Cell division protein SepF, found in Lactobacillus helveticus (strain DPC 4571).